The following is a 374-amino-acid chain: GPN-loop GTPase 1 (374 aa).

Ala-2 carries the N-acetylalanine modification. Position 29 to 34 (29 to 34 (GSGKTT)) interacts with GTP. The Gly-Pro-Asn (GPN)-loop; involved in dimer interface motif lies at 86–88 (GPN). Position 189 to 192 (189 to 192 (NKTD)) interacts with GTP. Residues Ser-301, Ser-312, and Ser-314 each carry the phosphoserine modification. The tract at residues 326–354 (RGTLDEEDEEADSDTDDIDHRVTEESHEE) is disordered. Thr-328 carries the post-translational modification Phosphothreonine. A compositionally biased stretch (acidic residues) spans 330-342 (DEEDEEADSDTDD). At Ser-338 the chain carries Phosphoserine. A Phosphothreonine modification is found at Thr-340. Over residues 343–354 (IDHRVTEESHEE) the composition is skewed to basic and acidic residues.

It belongs to the GPN-loop GTPase family. As to quaternary structure, heterodimer with GPN3. Binds to RNA polymerase II (RNAPII). Interacts directly with RNAPII subunits RPB4 and RPB7 and the CTD of RPB1. Interacts with XPA. Expressed ubiquitously.

The protein resides in the cytoplasm. Its subcellular location is the nucleus. In terms of biological role, small GTPase required for proper nuclear import of RNA polymerase II (RNAPII). May act at an RNAP assembly step prior to nuclear import. Forms an interface between the RNA polymerase II enzyme and chaperone/scaffolding proteins, suggesting that it is required to connect RNA polymerase II to regulators of protein complex formation. May be involved in nuclear localization of XPA. This Homo sapiens (Human) protein is GPN-loop GTPase 1.